The sequence spans 379 residues: Cytochrome b (379 aa).

The next 4 helical transmembrane spans lie at 34-54, 78-99, 114-134, and 179-199; these read YGSL…FLSM, WLLR…YLHA, WNIG…GYVL, and FFAF…LHIM. His-84 and His-98 together coordinate heme b. Heme b-binding residues include His-183 and His-197. His-202 contributes to the a ubiquinone binding site. Helical transmembrane passes span 227 to 247, 289 to 309, 321 to 341, and 349 to 369; these read IKDT…VLFE, LGGV…PLTS, LNKT…WIGG, and IIIG…SPTI.

This sequence belongs to the cytochrome b family. The main subunits of complex b-c1 are: cytochrome b, cytochrome c1 and the Rieske protein. It depends on heme b as a cofactor.

Its subcellular location is the mitochondrion inner membrane. Functionally, component of the ubiquinol-cytochrome c reductase complex (complex III or cytochrome b-c1 complex) that is part of the mitochondrial respiratory chain. The b-c1 complex mediates electron transfer from ubiquinol to cytochrome c. Contributes to the generation of a proton gradient across the mitochondrial membrane that is then used for ATP synthesis. This is Cytochrome b (MT-CYB) from Lumbricus terrestris (Common earthworm).